Consider the following 115-residue polypeptide: NADH-ubiquinone oxidoreductase chain 3 (115 aa).

A run of 3 helical transmembrane segments spans residues 4 to 24 (MLAMLINITLSLCLISLAFWL), 55 to 75 (FFLVGITFLLLDLEIALLLPL), and 84 to 104 (MITTTIVSLSLVSILALGLSY).

The protein belongs to the complex I subunit 3 family. As to quaternary structure, core subunit of respiratory chain NADH dehydrogenase (Complex I) which is composed of 45 different subunits. Interacts with TMEM186. Interacts with TMEM242.

It is found in the mitochondrion inner membrane. The enzyme catalyses a ubiquinone + NADH + 5 H(+)(in) = a ubiquinol + NAD(+) + 4 H(+)(out). In terms of biological role, core subunit of the mitochondrial membrane respiratory chain NADH dehydrogenase (Complex I) which catalyzes electron transfer from NADH through the respiratory chain, using ubiquinone as an electron acceptor. Essential for the catalytic activity of complex I. The chain is NADH-ubiquinone oxidoreductase chain 3 from Reithrodon auritus (Bunny rat).